Consider the following 825-residue polypeptide: Arabinolytic transcriptional activator araR (825 aa).

Residues 1 to 17 show a composition bias toward polar residues; that stretch reads MASSHQGNGTVPNSQTD. A disordered region spans residues 1–28; the sequence is MASSHQGNGTVPNSQTDAPPDSSTKRRW. A DNA-binding region (zn(2)-C6 fungal-type) is located at residues 35–61; the sequence is CDSCHARRVRCDRQFPCSRCLRSEITC. Residues 117-152 form a disordered region; sequence STFHHRSPPANAPTVSAPSVDGRRSQTDPQLPVRRP.

The protein belongs to the xlnR/xlr1 family. araR subfamily.

The protein localises to the nucleus. In terms of biological role, transcriptional activator of the arabinanolytic system. Involved in the regulation of extracellular arabinanolytic genes and in the regulation of the intracellular activities of L-arabinose catabolic genes in the pentose catabolic pathway (PCP) in response to the presence of L-arabinose. This chain is Arabinolytic transcriptional activator araR, found in Emericella nidulans (strain FGSC A4 / ATCC 38163 / CBS 112.46 / NRRL 194 / M139) (Aspergillus nidulans).